A 372-amino-acid polypeptide reads, in one-letter code: tRNA-specific 2-thiouridylase MnmA (372 aa).

ATP-binding positions include 11 to 18 and Met37; that span reads GMSGGVDS. Residues 97 to 99 are interaction with target base in tRNA; sequence NPD. The Nucleophile role is filled by Cys102. The cysteines at positions 102 and 199 are disulfide-linked. Gly126 lines the ATP pocket. The interaction with tRNA stretch occupies residues 149 to 151; the sequence is KDQ. Residue Cys199 is the Cysteine persulfide intermediate of the active site. An interaction with tRNA region spans residues 309 to 310; sequence RY.

It belongs to the MnmA/TRMU family.

The protein localises to the cytoplasm. The enzyme catalyses S-sulfanyl-L-cysteinyl-[protein] + uridine(34) in tRNA + AH2 + ATP = 2-thiouridine(34) in tRNA + L-cysteinyl-[protein] + A + AMP + diphosphate + H(+). Functionally, catalyzes the 2-thiolation of uridine at the wobble position (U34) of tRNA, leading to the formation of s(2)U34. This Staphylococcus aureus (strain Mu50 / ATCC 700699) protein is tRNA-specific 2-thiouridylase MnmA.